Consider the following 165-residue polypeptide: Anaerobic nitrite reductase GLB1 (165 aa).

Residues 12-162 (VFGEEQEALV…LVAAIKREMK (151 aa)) form the Globin domain. The short motif at 45–49 (EIAPS) is the Homodimerization element. Positions 55, 69, 73, 103, 107, and 108 each coordinate heme b. A Homodimerization motif is present at residues 115–127 (DGHFEVTGFALLE).

This sequence belongs to the plant globin family. In terms of assembly, homodimer. Heme b serves as cofactor. As to expression, in embryonic organs and at low levels in vegetative organs.

The protein resides in the cytoplasm. It localises to the nucleus. It catalyses the reaction Fe(III)-heme b-[protein] + nitric oxide + H2O = Fe(II)-heme b-[protein] + nitrite + 2 H(+). Functionally, phytoglobin that reduces nitrite to nitric oxide (NO) under anoxic conditions (e.g. during flooding or in waterlogged soil). May not function as an oxygen storage or transport protein. Has an unusually high affinity for O(2) through an hexacoordinate heme iron because of a very low dissociation constant. The sequence is that of Anaerobic nitrite reductase GLB1 (HB) from Zea mays (Maize).